The following is a 443-amino-acid chain: ATP-dependent protease ATPase subunit HslU (443 aa).

ATP contacts are provided by residues Ile18, 60–65, Asp256, Glu321, and Arg393; that span reads GVGKTE.

The protein belongs to the ClpX chaperone family. HslU subfamily. As to quaternary structure, a double ring-shaped homohexamer of HslV is capped on each side by a ring-shaped HslU homohexamer. The assembly of the HslU/HslV complex is dependent on binding of ATP.

Its subcellular location is the cytoplasm. In terms of biological role, ATPase subunit of a proteasome-like degradation complex; this subunit has chaperone activity. The binding of ATP and its subsequent hydrolysis by HslU are essential for unfolding of protein substrates subsequently hydrolyzed by HslV. HslU recognizes the N-terminal part of its protein substrates and unfolds these before they are guided to HslV for hydrolysis. The chain is ATP-dependent protease ATPase subunit HslU from Histophilus somni (strain 2336) (Haemophilus somnus).